The following is a 227-amino-acid chain: Phosphoribosylformylglycinamidine synthase subunit PurQ (227 aa).

In terms of domain architecture, Glutamine amidotransferase type-1 spans 2 to 226 (KFAVIQFPGS…VKAWKEEQVN (225 aa)). Residue C86 is the Nucleophile of the active site. Active-site residues include H195 and E197.

Part of the FGAM synthase complex composed of 1 PurL, 1 PurQ and 2 PurS subunits.

The protein localises to the cytoplasm. The enzyme catalyses N(2)-formyl-N(1)-(5-phospho-beta-D-ribosyl)glycinamide + L-glutamine + ATP + H2O = 2-formamido-N(1)-(5-O-phospho-beta-D-ribosyl)acetamidine + L-glutamate + ADP + phosphate + H(+). It catalyses the reaction L-glutamine + H2O = L-glutamate + NH4(+). Its pathway is purine metabolism; IMP biosynthesis via de novo pathway; 5-amino-1-(5-phospho-D-ribosyl)imidazole from N(2)-formyl-N(1)-(5-phospho-D-ribosyl)glycinamide: step 1/2. Part of the phosphoribosylformylglycinamidine synthase complex involved in the purines biosynthetic pathway. Catalyzes the ATP-dependent conversion of formylglycinamide ribonucleotide (FGAR) and glutamine to yield formylglycinamidine ribonucleotide (FGAM) and glutamate. The FGAM synthase complex is composed of three subunits. PurQ produces an ammonia molecule by converting glutamine to glutamate. PurL transfers the ammonia molecule to FGAR to form FGAM in an ATP-dependent manner. PurS interacts with PurQ and PurL and is thought to assist in the transfer of the ammonia molecule from PurQ to PurL. This Listeria monocytogenes serotype 4a (strain HCC23) protein is Phosphoribosylformylglycinamidine synthase subunit PurQ.